We begin with the raw amino-acid sequence, 413 residues long: Phosphopentomutase (413 aa).

Aspartate 11, aspartate 306, histidine 311, aspartate 347, histidine 348, and histidine 359 together coordinate Mn(2+).

This sequence belongs to the phosphopentomutase family. Requires Mn(2+) as cofactor.

Its subcellular location is the cytoplasm. The enzyme catalyses 2-deoxy-alpha-D-ribose 1-phosphate = 2-deoxy-D-ribose 5-phosphate. It catalyses the reaction alpha-D-ribose 1-phosphate = D-ribose 5-phosphate. The protein operates within carbohydrate degradation; 2-deoxy-D-ribose 1-phosphate degradation; D-glyceraldehyde 3-phosphate and acetaldehyde from 2-deoxy-alpha-D-ribose 1-phosphate: step 1/2. In terms of biological role, isomerase that catalyzes the conversion of deoxy-ribose 1-phosphate (dRib-1-P) and ribose 1-phosphate (Rib-1-P) to deoxy-ribose 5-phosphate (dRib-5-P) and ribose 5-phosphate (Rib-5-P), respectively. The chain is Phosphopentomutase from Helicobacter pylori (strain P12).